A 460-amino-acid chain; its full sequence is WD repeat-containing protein 41 (460 aa).

WD repeat units lie at residues 40 to 79 (EAHR…KLLE), 82 to 128 (GHTQ…QIQR), 131 to 168 (CFQS…LCKT), 220 to 258 (DHQD…VQAC), 321 to 359 (AHDS…QLAA), and 403 to 441 (GHSS…SGVR).

As to quaternary structure, component of the C9orf72-SMCR8 complex, at least composed of C9orf72, SMCR8 and WDR41. The complex is formed of two protomers, each individually consisting of one molecule each of C9orf72, SMCR8 and WDR41. The protomers homodimerize via an interaction between C9orf72 (via C-terminus) and SMCR8 (via N-terminus). Within each protomer SMCR8 (via DENN domain) acts as a bridging protein between WDR41 (via C-terminus and N-terminus) and C9orf72 (via C-terminus). The C9orf72-SMCR8 complex associates with the ULK1/ATG1 kinase complex.

The protein localises to the cytoplasm. In terms of biological role, non-catalytic component of the C9orf72-SMCR8 complex, a complex that has guanine nucleotide exchange factor (GEF) activity and regulates autophagy. The C9orf72-SMCR8 complex promotes the exchange of GDP to GTP, converting inactive GDP-bound RAB8A and RAB39B into their active GTP-bound form, thereby promoting autophagosome maturation. As part of the C9orf72-SMCR8 complex, stimulates RAB8A and RAB11A GTPase activity in vitro, however WDR42 is shown not be an essential complex component for this function. The C9orf72-SMCR8 complex also acts as a negative regulator of autophagy initiation by interacting with the ULK1/ATG1 kinase complex and inhibiting its protein kinase activity. The sequence is that of WD repeat-containing protein 41 from Mus musculus (Mouse).